Consider the following 257-residue polypeptide: TLC domain-containing protein 3A (257 aa).

Transmembrane regions (helical) follow at residues 1 to 21, 42 to 62, 77 to 97, 113 to 135, 142 to 162, 181 to 201, and 220 to 240; these read MLLT…LCTW, LVSS…IRSC, VWFL…CEWC, FLSR…VPVA, LGDF…FVSL, GILT…FMYW, and FYCN…FCLL. Residues 33-249 enclose the TLC domain; sequence TDCVMISTRL…LCRKAVRLFD (217 aa).

Interacts with GGT7 isoform 3 and SLC3A2. As to expression, highly expressed in pancreas. Detected at intermediate levels in heart, placenta and kidney, and at low levels in brain, liver and skeletal muscle. Not detected in normal lung.

It is found in the cell membrane. The protein is TLC domain-containing protein 3A of Homo sapiens (Human).